The primary structure comprises 423 residues: Kynureninase (423 aa).

Pyridoxal 5'-phosphate is bound by residues Leu-105, Ser-106, 133–136 (FPSD), Asp-218, His-221, and Tyr-243. Lys-244 bears the N6-(pyridoxal phosphate)lysine mark. Pyridoxal 5'-phosphate-binding residues include Trp-273 and Asn-301.

Belongs to the kynureninase family. In terms of assembly, homodimer. Requires pyridoxal 5'-phosphate as cofactor.

It carries out the reaction L-kynurenine + H2O = anthranilate + L-alanine + H(+). The enzyme catalyses 3-hydroxy-L-kynurenine + H2O = 3-hydroxyanthranilate + L-alanine + H(+). It functions in the pathway amino-acid degradation; L-kynurenine degradation; L-alanine and anthranilate from L-kynurenine: step 1/1. Its pathway is cofactor biosynthesis; NAD(+) biosynthesis; quinolinate from L-kynurenine: step 2/3. Its function is as follows. Catalyzes the cleavage of L-kynurenine (L-Kyn) and L-3-hydroxykynurenine (L-3OHKyn) into anthranilic acid (AA) and 3-hydroxyanthranilic acid (3-OHAA), respectively. In Xanthomonas oryzae pv. oryzae (strain MAFF 311018), this protein is Kynureninase.